Here is a 498-residue protein sequence, read N- to C-terminus: Glycerol kinase (498 aa).

T12 is a binding site for ADP. 3 residues coordinate ATP: T12, T13, and S14. Sn-glycerol 3-phosphate is bound at residue T12. R16 provides a ligand contact to ADP. Sn-glycerol 3-phosphate is bound by residues R82, E83, Y134, and D243. Residues R82, E83, Y134, D243, and Q244 each coordinate glycerol. ADP-binding residues include T265 and G308. Positions 265, 308, 312, and 409 each coordinate ATP. Positions 409 and 413 each coordinate ADP.

Belongs to the FGGY kinase family. In terms of assembly, homotetramer and homodimer (in equilibrium).

It carries out the reaction glycerol + ATP = sn-glycerol 3-phosphate + ADP + H(+). It participates in polyol metabolism; glycerol degradation via glycerol kinase pathway; sn-glycerol 3-phosphate from glycerol: step 1/1. With respect to regulation, activated by phosphorylation and inhibited by fructose 1,6-bisphosphate (FBP). Key enzyme in the regulation of glycerol uptake and metabolism. Catalyzes the phosphorylation of glycerol to yield sn-glycerol 3-phosphate. This chain is Glycerol kinase, found in Clostridium botulinum (strain 657 / Type Ba4).